The primary structure comprises 225 residues: Uridylate kinase (225 aa).

Lys7–Ser11 serves as a coordination point for ATP. Residue Gly44 coordinates UMP. 2 residues coordinate ATP: Gly45 and Arg49. UMP-binding positions include Asp66 and Phe114–Thr120. Residues Tyr147 and Glu150 each contribute to the ATP site.

This sequence belongs to the UMP kinase family. As to quaternary structure, homohexamer.

It localises to the cytoplasm. The catalysed reaction is UMP + ATP = UDP + ADP. The protein operates within pyrimidine metabolism; CTP biosynthesis via de novo pathway; UDP from UMP (UMPK route): step 1/1. With respect to regulation, inhibited by UTP. Functionally, catalyzes the reversible phosphorylation of UMP to UDP. This Aeropyrum pernix (strain ATCC 700893 / DSM 11879 / JCM 9820 / NBRC 100138 / K1) protein is Uridylate kinase.